Consider the following 257-residue polypeptide: Putative hydro-lyase Bphy_2364 (257 aa).

The protein belongs to the D-glutamate cyclase family.

The polypeptide is Putative hydro-lyase Bphy_2364 (Paraburkholderia phymatum (strain DSM 17167 / CIP 108236 / LMG 21445 / STM815) (Burkholderia phymatum)).